We begin with the raw amino-acid sequence, 317 residues long: DNA-directed RNA polymerase subunit alpha (317 aa).

The alpha N-terminal domain (alpha-NTD) stretch occupies residues 1–234; that stretch reads MKQFNKPEFG…SHFDVFTTLA (234 aa). Positions 249-317 are alpha C-terminal domain (alpha-CTD); sequence EEKELDKPVE…AALELTFKQN (69 aa).

This sequence belongs to the RNA polymerase alpha chain family. Homodimer. The RNAP catalytic core consists of 2 alpha, 1 beta, 1 beta' and 1 omega subunit. When a sigma factor is associated with the core the holoenzyme is formed, which can initiate transcription.

It carries out the reaction RNA(n) + a ribonucleoside 5'-triphosphate = RNA(n+1) + diphosphate. DNA-dependent RNA polymerase catalyzes the transcription of DNA into RNA using the four ribonucleoside triphosphates as substrates. In Mesoplasma florum (strain ATCC 33453 / NBRC 100688 / NCTC 11704 / L1) (Acholeplasma florum), this protein is DNA-directed RNA polymerase subunit alpha.